Reading from the N-terminus, the 625-residue chain is Vicilin-like antimicrobial peptides 2-3 (625 aa).

Disordered regions lie at residues 120–152 (QQKR…QQRE) and 180–212 (RQHG…NPYY). Over residues 198-212 (RYEEGEEKQSDNPYY) the composition is skewed to basic and acidic residues. Cupin type-1 domains follow at residues 230–369 (SVLE…ERLR) and 414–584 (YNLF…KEVE). The tract at residues 594 to 614 (IFFPGPRQHQQQSPRSTKQQQ) is disordered. A compositionally biased stretch (low complexity) spans 601-614 (QHQQQSPRSTKQQQ).

It belongs to the 7S seed storage protein family.

The protein resides in the secreted. Functionally, antimicrobial peptides 2b, 2c and 2d have antibacterial and antifungal activity against a range of species. The protein is Vicilin-like antimicrobial peptides 2-3 of Macadamia integrifolia (Macadamia nut).